The primary structure comprises 421 residues: O-glycosyltransferase braB (421 aa).

Positions Met-1–Pro-26 are disordered. Residues Gly-13–Ala-22 show a composition bias toward polar residues.

Belongs to the afumC glycosyltransferase family.

Its pathway is secondary metabolite biosynthesis. O-glycosyltransferase; part of the gene cluster that mediates the biosynthesis of the brasilane terpene glycosides brasilane D and E. The biosynthesis starts with the activity of the terpene cyclase braA that converts farnesyl pyrophosphate into the sesquiterpene alcohol trichobrasilenol. Subsequently, trichobrasilenol is glycosylated by the O-glycosyltransferase braB putatively using UDP-GlcNAc as sugar donor to yield brasilane A. The latter then undergoes two rounds of oxidation performed by the cytochrome P450 monooxygenase braC. In the first round braC hydroxylates C-12 forming brasilane D, which serves as substrate in the second round to establish the epoxide at the bond between C-5 and C-10 and oxidize the alcohol at C-12 to an aldehyde leading to the final product brasilane E. BraB is also able to glycosylate geraniol, linalool, perillyl alcohol, 3,4-dichlorophenol and, to a lesser extend, benzyl alcohol. The protein is O-glycosyltransferase braB of Annulohypoxylon truncatum (Hypoxylon truncatum).